The primary structure comprises 144 residues: MVKVFFVLAVLSSIISYINIDPMKSSFFLIFSLLFSMPVISMSMHIWFSYFICLLFLSGIFVILVYFSSLSKINVVKSYMAVFLLLLSMLYFSPTVLTYSSYLGLSGFYYSIYWFIFCFILVCLLFFMNFSSYFLNFSGALRKV.

5 helical membrane-spanning segments follow: residues 1 to 21 (MVKVFFVLAVLSSIISYINID), 25 to 45 (SSFFLIFSLLFSMPVISMSMH), 46 to 66 (IWFSYFICLLFLSGIFVILVY), 79 to 99 (YMAVFLLLLSMLYFSPTVLTY), and 108 to 128 (FYYSIYWFIFCFILVCLLFFM).

This sequence belongs to the complex I subunit 6 family.

The protein localises to the mitochondrion membrane. It carries out the reaction a ubiquinone + NADH + 5 H(+)(in) = a ubiquinol + NAD(+) + 4 H(+)(out). Functionally, core subunit of the mitochondrial membrane respiratory chain NADH dehydrogenase (Complex I) that is believed to belong to the minimal assembly required for catalysis. Complex I functions in the transfer of electrons from NADH to the respiratory chain. The immediate electron acceptor for the enzyme is believed to be ubiquinone. This chain is NADH-ubiquinone oxidoreductase chain 6, found in Caenorhabditis elegans.